The primary structure comprises 293 residues: Lymphocyte antigen 6 complex locus protein G6f (293 aa).

The N-terminal stretch at M1–A19 is a signal peptide. Residues D20–D124 enclose the Ig-like V-type domain. The Extracellular portion of the chain corresponds to D20–W237. A disulfide bridge links C37 with C108. N90 is a glycosylation site (N-linked (GlcNAc...) asparagine). A helical transmembrane segment spans residues I238–I258. At W259–R293 the chain is on the cytoplasmic side. Y284 carries the post-translational modification Phosphotyrosine.

As to quaternary structure, homodimer; disulfide-linked. Interacts with GRB2 and GRB7 in a phosphorylation-dependent manner. In terms of processing, N-glycosylated.

Its subcellular location is the cell membrane. Functionally, may play a role in the downstream signal transduction pathways involving GRB2 and GRB7. The chain is Lymphocyte antigen 6 complex locus protein G6f (Ly6g6f) from Rattus norvegicus (Rat).